Consider the following 580-residue polypeptide: Multidrug resistance-like ATP-binding protein MdlB (580 aa).

The 286-residue stretch at 25-310 (LILAFIFLLS…ITIQQSVLQQ (286 aa)) folds into the ABC transmembrane type-1 domain. 6 consecutive transmembrane segments (helical) span residues 26 to 46 (ILAF…PILI), 61 to 81 (LLII…SVFL), 150 to 170 (IILI…MALV), 173 to 193 (FILP…TPLL), 247 to 267 (LDGF…LCNF), and 268 to 288 (MFLF…YAFI). Positions 341–575 (INIQNVSFYH…KSCYYKMYKF (235 aa)) constitute an ABC transporter domain. Residue 375–382 (GHTGSGKS) participates in ATP binding.

The protein belongs to the ABC transporter superfamily. Drug exporter-2 (TC 3.A.1.117) family.

Its subcellular location is the cell membrane. It catalyses the reaction ATP + H2O + xenobioticSide 1 = ADP + phosphate + xenobioticSide 2.. The protein is Multidrug resistance-like ATP-binding protein MdlB (mdlB) of Buchnera aphidicola subsp. Acyrthosiphon pisum (strain APS) (Acyrthosiphon pisum symbiotic bacterium).